The chain runs to 225 residues: Peptidyl-tRNA hydrolase (225 aa).

Residue Y14 coordinates tRNA. H19 acts as the Proton acceptor in catalysis. TRNA-binding residues include F64, N66, and N112. The tract at residues 184-225 (ALRMQPPKPEKPKPAAKAPEAQAPEAAPDARSALQKLADRFR) is disordered. Over residues 198–210 (AAKAPEAQAPEAA) the composition is skewed to low complexity.

The protein belongs to the PTH family. As to quaternary structure, monomer.

It localises to the cytoplasm. It catalyses the reaction an N-acyl-L-alpha-aminoacyl-tRNA + H2O = an N-acyl-L-amino acid + a tRNA + H(+). In terms of biological role, hydrolyzes ribosome-free peptidyl-tRNAs (with 1 or more amino acids incorporated), which drop off the ribosome during protein synthesis, or as a result of ribosome stalling. Catalyzes the release of premature peptidyl moieties from peptidyl-tRNA molecules trapped in stalled 50S ribosomal subunits, and thus maintains levels of free tRNAs and 50S ribosomes. This Cereibacter sphaeroides (strain KD131 / KCTC 12085) (Rhodobacter sphaeroides) protein is Peptidyl-tRNA hydrolase.